Reading from the N-terminus, the 431-residue chain is UDP-N-acetylmuramate--L-alanine ligase (431 aa).

Residue 108 to 114 (GSHGKTS) participates in ATP binding.

The protein belongs to the MurCDEF family.

It is found in the cytoplasm. The catalysed reaction is UDP-N-acetyl-alpha-D-muramate + L-alanine + ATP = UDP-N-acetyl-alpha-D-muramoyl-L-alanine + ADP + phosphate + H(+). Its pathway is cell wall biogenesis; peptidoglycan biosynthesis. Functionally, cell wall formation. This chain is UDP-N-acetylmuramate--L-alanine ligase, found in Macrococcus caseolyticus (strain JCSC5402) (Macrococcoides caseolyticum).